The chain runs to 195 residues: Small ribosomal subunit protein uS4c (195 aa).

Residues 82-143 (MRLDNILFRL…KQRSKALIQN (62 aa)) form the S4 RNA-binding domain.

This sequence belongs to the universal ribosomal protein uS4 family. Part of the 30S ribosomal subunit. Contacts protein S5. The interaction surface between S4 and S5 is involved in control of translational fidelity.

Its subcellular location is the plastid. It localises to the chloroplast. One of the primary rRNA binding proteins, it binds directly to 16S rRNA where it nucleates assembly of the body of the 30S subunit. In terms of biological role, with S5 and S12 plays an important role in translational accuracy. This chain is Small ribosomal subunit protein uS4c (rps4), found in Gladiolus murielae (Abyssinian gladiolus).